Here is a 75-residue protein sequence, read N- to C-terminus: UPF0291 protein LMOf2365_1322 (75 aa).

The disordered stretch occupies residues 56–75 (DPNGTDVTPHKVKQLRKNKH). Positions 65 to 75 (HKVKQLRKNKH) are enriched in basic residues.

Belongs to the UPF0291 family.

The protein resides in the cytoplasm. This is UPF0291 protein LMOf2365_1322 from Listeria monocytogenes serotype 4b (strain F2365).